The primary structure comprises 174 residues: ATP synthase subunit b, organellar chromatophore (174 aa).

Residues 26-46 form a helical membrane-spanning segment; that stretch reads LINLIIVIGVLFTFLRGFLGE.

The protein belongs to the ATPase B chain family. As to quaternary structure, F-type ATPases have 2 components, F(1) - the catalytic core - and F(0) - the membrane proton channel. F(1) has five subunits: alpha(3), beta(3), gamma(1), delta(1), epsilon(1). F(0) has four main subunits: a(1), b(1), b'(1) and c(10-14). The alpha and beta chains form an alternating ring which encloses part of the gamma chain. F(1) is attached to F(0) by a central stalk formed by the gamma and epsilon chains, while a peripheral stalk is formed by the delta, b and b' chains.

Its subcellular location is the plastid. It is found in the organellar chromatophore thylakoid membrane. Its function is as follows. F(1)F(0) ATP synthase produces ATP from ADP in the presence of a proton or sodium gradient. F-type ATPases consist of two structural domains, F(1) containing the extramembraneous catalytic core and F(0) containing the membrane proton channel, linked together by a central stalk and a peripheral stalk. During catalysis, ATP synthesis in the catalytic domain of F(1) is coupled via a rotary mechanism of the central stalk subunits to proton translocation. In terms of biological role, component of the F(0) channel, it forms part of the peripheral stalk, linking F(1) to F(0). The polypeptide is ATP synthase subunit b, organellar chromatophore (Paulinella chromatophora).